Reading from the N-terminus, the 532-residue chain is Cytochrome P450 99A2 (532 aa).

A helical membrane pass occupies residues 30–50 (SAATLTLVSLLTLPILLALLT). Residue C468 participates in heme binding. A helical transmembrane segment spans residues 473–493 (FGMVLLELIVARLLYYFDWSL).

This sequence belongs to the cytochrome P450 family. Heme is required as a cofactor.

Its subcellular location is the membrane. In terms of biological role, involved in momilactone phytoalexins biosynthesis. Participates in the biosynthetic steps between 9-beta-pimara-7,15-diene and 3-beta-hydroxy-9-beta-pimara-7,15-dien-19,6-beta-olide. In Oryza sativa subsp. japonica (Rice), this protein is Cytochrome P450 99A2 (CYP99A2).